A 184-amino-acid chain; its full sequence is Trichothecene 15-O-acetyltransferase SAT16 (184 aa).

A substrate-binding site is contributed by H154.

This sequence belongs to the trichothecene O-acetyltransferase family.

It participates in mycotoxin biosynthesis. Functionally, trichothecene 15-O-acetyltransferase; part of the satratoxin SC2 cluster involved in the biosynthesis of satratoxins, trichothecene mycotoxins that are associated with human food poisonings. Satratoxins are suggested to be made by products of multiple gene clusters (SC1, SC2 and SC3) that encode 21 proteins in all, including polyketide synthases, acetyltransferases, and other enzymes expected to modify the trichothecene skeleton. SC1 encodes 10 proteins, SAT1 to SAT10. The largest are SAT8, which encodes a putative polyketide synthase (PKS) with a conventional non-reducing architecture, and SAT10, a putative protein containing four ankyrin repeats and thus may be involved in protein scaffolding. The putative short-chain reductase SAT3 may assist the PKS in some capacity. SAT6 contains a secretory lipase domain and acts probably as a trichothecene esterase. SAT5 encodes a putative acetyltransferase, and so, with SAT6, may affect endogenous protection from toxicity. The probable transcription factor SAT9 may regulate the expression of the SC1 cluster. SC2 encodes proteins SAT11 to SAT16, the largest of which encodes the putative reducing PKS SAT13. SAT11 is a cytochrome P450 monooxygenase, while SAT14 and SAT16 are probable acetyltransferases. The SC2 cluster may be regulated by the transcription factor SAT15. SC3 is a small cluster that encodes 5 proteins, SAT17 to SAT21. SAT21 is a putative MFS-type transporter which may have a role in exporting secondary metabolites. The four other proteins putatively encoded in SC3 include the taurine hydroxylase-like protein SAT17, the O-methyltransferase SAT18, the acetyltransferase SAT19, and the Cys6-type zinc finger SAT20, the latter being probably involved in regulation of SC3 expression. The protein is Trichothecene 15-O-acetyltransferase SAT16 of Stachybotrys chartarum (strain CBS 109288 / IBT 7711) (Toxic black mold).